The chain runs to 454 residues: Tyrosine aminotransferase (454 aa).

An N-acetylmethionine modification is found at Met1. Lys280 carries the N6-(pyridoxal phosphate)lysine modification. Ser448 carries the post-translational modification Phosphoserine.

This sequence belongs to the class-I pyridoxal-phosphate-dependent aminotransferase family. In terms of assembly, homodimer. Pyridoxal 5'-phosphate is required as a cofactor.

It carries out the reaction L-tyrosine + 2-oxoglutarate = 3-(4-hydroxyphenyl)pyruvate + L-glutamate. It functions in the pathway amino-acid degradation; L-phenylalanine degradation; acetoacetate and fumarate from L-phenylalanine: step 2/6. Transaminase involved in tyrosine breakdown. Converts tyrosine to p-hydroxyphenylpyruvate. Can catalyze the reverse reaction, using glutamic acid, with 2-oxoglutarate as cosubstrate (in vitro). Has much lower affinity and transaminase activity for phenylalanine. This is Tyrosine aminotransferase (Tat) from Mus musculus (Mouse).